Reading from the N-terminus, the 335-residue chain is Phenylalanine--tRNA ligase alpha subunit (335 aa).

Glu-262 contacts Mg(2+).

Belongs to the class-II aminoacyl-tRNA synthetase family. Phe-tRNA synthetase alpha subunit type 1 subfamily. Tetramer of two alpha and two beta subunits. It depends on Mg(2+) as a cofactor.

Its subcellular location is the cytoplasm. It carries out the reaction tRNA(Phe) + L-phenylalanine + ATP = L-phenylalanyl-tRNA(Phe) + AMP + diphosphate + H(+). In Prochlorococcus marinus (strain NATL2A), this protein is Phenylalanine--tRNA ligase alpha subunit.